The sequence spans 334 residues: RNA ligase 2 (334 aa).

The tract at residues 1-234 (MFKKYSSLEN…KCKNSKFSEK (234 aa)) is adenylyltransferase. Residues Glu34, Lys35, Ile36, Asn40, Arg55, and Glu99 each coordinate AMP. Residue Lys35 is the N6-AMP-lysine intermediate of the active site. 5 residues coordinate Mg(2+): Ile162, Leu164, Asn166, Glu204, and Tyr206. Lys225 and Lys227 together coordinate AMP.

It belongs to the RNA ligase 2 family. Mg(2+) is required as a cofactor. Mn(2+) serves as cofactor.

The catalysed reaction is ATP + (ribonucleotide)n-3'-hydroxyl + 5'-phospho-(ribonucleotide)m = (ribonucleotide)n+m + AMP + diphosphate.. In terms of biological role, repairs 3'-OH/5'-PO4 nicks in duplex RNA or RNA:DNA hybrid in which the broken 3'-OH strand is RNA. The nick ligation reaction entails three nucleotidyl transfer steps. In the first step, the RNA ligase reacts with ATP in the absence of nucleic acid to form a covalent ligase-AMP intermediate and release pyrophosphate. In step 2, the ligase-AMP binds to the nicked duplex nucleic acid and transfers the adenylate to the 5'-PO4 terminus to form an adenylylated nicked intermediate. In step 3, the RNA ligase directs the attack of the nick 3'-OH on the 5'-phosphoanhydride linkage, resulting in a repaired 3' - 5' phosphodiester and release of AMP. The protein is RNA ligase 2 (Y10A) of Enterobacteria phage T4 (Bacteriophage T4).